We begin with the raw amino-acid sequence, 157 residues long: Transcription elongation factor GreA (157 aa).

The stretch at 1–75 (MSKEIILTQE…VETLINRAKV (75 aa)) forms a coiled coil.

Belongs to the GreA/GreB family.

In terms of biological role, necessary for efficient RNA polymerase transcription elongation past template-encoded arresting sites. The arresting sites in DNA have the property of trapping a certain fraction of elongating RNA polymerases that pass through, resulting in locked ternary complexes. Cleavage of the nascent transcript by cleavage factors such as GreA or GreB allows the resumption of elongation from the new 3'terminus. GreA releases sequences of 2 to 3 nucleotides. The polypeptide is Transcription elongation factor GreA (Mycoplasma capricolum subsp. capricolum (strain California kid / ATCC 27343 / NCTC 10154)).